Consider the following 252-residue polypeptide: 3-dehydroquinate dehydratase (252 aa).

3-dehydroquinate contacts are provided by residues S21, 46 to 48 (EWR), and R82. H143 serves as the catalytic Proton donor/acceptor. Residue K170 is the Schiff-base intermediate with substrate of the active site. 3 residues coordinate 3-dehydroquinate: R213, S232, and Q236.

Belongs to the type-I 3-dehydroquinase family. As to quaternary structure, homodimer.

It carries out the reaction 3-dehydroquinate = 3-dehydroshikimate + H2O. Its pathway is metabolic intermediate biosynthesis; chorismate biosynthesis; chorismate from D-erythrose 4-phosphate and phosphoenolpyruvate: step 3/7. In terms of biological role, involved in the third step of the chorismate pathway, which leads to the biosynthesis of aromatic amino acids. Catalyzes the cis-dehydration of 3-dehydroquinate (DHQ) and introduces the first double bond of the aromatic ring to yield 3-dehydroshikimate. This chain is 3-dehydroquinate dehydratase, found in Escherichia coli O7:K1 (strain IAI39 / ExPEC).